Here is a 91-residue protein sequence, read N- to C-terminus: LYR motif-containing protein 4 (91 aa).

2 residues coordinate pantetheine 4'-phosphate: arginine 6 and lysine 44. The residue at position 47 (lysine 47) is an N6-succinyllysine.

It belongs to the complex I LYR family. As to quaternary structure, homodimer. Component of the mitochondrial core iron-sulfur cluster (ISC) complex composed of NFS1, LYRM4, NDUFAB1, ISCU, FXN, and FDX2; this complex is a heterohexamer containing two copies of each monomer. Component of the cyteine desulfurase complex composed of NFS1, LYRM4 and NDUFAB1; this complex contributes to the stability and cysteine desulfurase activity of NFS1. Interacts with FXN; this interaction is nickel-dependent. Interacts with the cytoplasmic form of NFS1; the complex increases the stability of NFS1. Forms a complex with the cytoplasmic form of NFS1; this complex increases the stability and cysteine desulfurase activity of NFS1. Interacts with NFS1.

The protein resides in the mitochondrion. Its subcellular location is the nucleus. It functions in the pathway cofactor biosynthesis; iron-sulfur cluster biosynthesis. Its function is as follows. Stabilizing factor, of the core iron-sulfur cluster (ISC) assembly complex, that regulates, in association with NDUFAB1, the stability and the cysteine desulfurase activity of NFS1 and participates in the [2Fe-2S] clusters assembly on the scaffolding protein ISCU. The core iron-sulfur cluster (ISC) assembly complex is involved in the de novo synthesis of a [2Fe-2S] cluster, the first step of the mitochondrial iron-sulfur protein biogenesis. This process is initiated by the cysteine desulfurase complex (NFS1:LYRM4:NDUFAB1) that produces persulfide which is delivered on the scaffold protein ISCU in a FXN-dependent manner. Then this complex is stabilized by FDX2 which provides reducing equivalents to accomplish the [2Fe-2S] cluster assembly. Finally, the [2Fe-2S] cluster is transferred from ISCU to chaperone proteins, including HSCB, HSPA9 and GLRX5. May also participates in the iron-sulfur protein biogenesis in the cytoplasm through its interaction with the cytoplasmic form of NFS1. The sequence is that of LYR motif-containing protein 4 from Bos taurus (Bovine).